Reading from the N-terminus, the 230-residue chain is Probable dual specificity protein phosphatase DDB_G0283417 (230 aa).

In terms of domain architecture, Tyrosine-protein phosphatase spans 78 to 230; it reads NNNYESINLY…LEIFEKELLF (153 aa). Cysteine 174 (phosphocysteine intermediate) is an active-site residue.

The protein belongs to the protein-tyrosine phosphatase family. Non-receptor class dual specificity subfamily.

It carries out the reaction O-phospho-L-tyrosyl-[protein] + H2O = L-tyrosyl-[protein] + phosphate. The catalysed reaction is O-phospho-L-seryl-[protein] + H2O = L-seryl-[protein] + phosphate. It catalyses the reaction O-phospho-L-threonyl-[protein] + H2O = L-threonyl-[protein] + phosphate. Has a dual specificity toward Ser/Thr and Tyr-containing proteins. In Dictyostelium discoideum (Social amoeba), this protein is Probable dual specificity protein phosphatase DDB_G0283417.